The primary structure comprises 233 residues: 7-cyano-7-deazaguanine synthase (233 aa).

Residue Leu7–Ser17 participates in ATP binding. The Zn(2+) site is built by Cys195, Cys206, Cys209, and Cys212.

The protein belongs to the QueC family. Zn(2+) serves as cofactor.

It catalyses the reaction 7-carboxy-7-deazaguanine + NH4(+) + ATP = 7-cyano-7-deazaguanine + ADP + phosphate + H2O + H(+). It participates in purine metabolism; 7-cyano-7-deazaguanine biosynthesis. Catalyzes the ATP-dependent conversion of 7-carboxy-7-deazaguanine (CDG) to 7-cyano-7-deazaguanine (preQ(0)). The sequence is that of 7-cyano-7-deazaguanine synthase from Methanococcus maripaludis (strain C6 / ATCC BAA-1332).